The primary structure comprises 310 residues: Zinc finger CCCH domain-containing protein 14 (310 aa).

The interval 56-75 (ESLSPSPPSSSSPPSRVDTT) is disordered. A coiled-coil region spans residues 84 to 129 (KLILEYDELNEHYELCLNRLQSLMTELDSLRHENDSLRFENSDLLK). The span at 155–167 (QISDSRSAKRNNQ) shows a compositional bias: basic and acidic residues. Positions 155–174 (QISDSRSAKRNNQERNSLPK) are disordered. C3H1-type zinc fingers lie at residues 232–260 (MMKTELCNKWQETGACCYGDNCQFAHGID) and 270–298 (RYKTEVCRMMVTGAMCPYGHRCHFRHSLT).

Highly expressed in secondary cell wall-forming tissues and the xylem cells of roots. Expressed predominantly in inflorescence stems, flowers and siliques. Highly expressed in the basal portion of stems, where cells are undergoing secondary cell wall thickening.

Functionally, functions probably as a transcriptional factor that activates genes involved in secondary cell wall biosynthesis. May play a role in both transcriptional and post-transcriptional regulation. Binds to ssDNA, dsDNA, and ribohomopolymers in vitro. Maybe involved in post-transcriptional regulation of its target genes. Targets RNA of a polygalacturonase, a well-known cell wall modifying gene. Functions redudantly with C3H15 to regulate secondary cell wall formation. C3H14 and C3H15 have overlapping roles in the regulation of secondary cell wall formation and anther development. C3H14 may contribute more to secondary cell wall thickening while C3H15 could be more important in anther development. May regulate at both the transcriptional and post-transcriptional levels the expression of many genes involved in various biological processes, particularly those associated with cell wall metabolism and pollen development. The sequence is that of Zinc finger CCCH domain-containing protein 14 from Arabidopsis thaliana (Mouse-ear cress).